We begin with the raw amino-acid sequence, 67 residues long: Conotoxin VnMMSK-02 (67 aa).

The signal sequence occupies residues 1–20 (MMSKLGALLTICLLLFPLTA). A propeptide spanning residues 21-52 (LPLDGDQPADRPAERMQDDISSEQHPLFDKER) is cleaved from the precursor. Glutamine 53 is subject to Pyrrolidone carboxylic acid. 3 disulfides stabilise this stretch: cysteine 54-cysteine 66, cysteine 55-cysteine 62, and cysteine 59-cysteine 65. Proline 64 bears the 4-hydroxyproline mark. Cysteine 66 is subject to Cysteine amide.

The protein belongs to the conotoxin M superfamily. Expressed by the venom duct.

The protein localises to the secreted. In Conus ventricosus (Mediterranean cone), this protein is Conotoxin VnMMSK-02.